Reading from the N-terminus, the 206-residue chain is Small ribosomal subunit protein eS8 (206 aa).

Residues 1 to 37 (MGISRDSRHKRSATGAKRAQFRKKRKFELGRQPANTK) are disordered.

The protein belongs to the eukaryotic ribosomal protein eS8 family. Component of the small ribosomal subunit. Mature ribosomes consist of a small (40S) and a large (60S) subunit. The 40S subunit contains about 32 different proteins and 1 molecule of RNA (18S). The 60S subunit contains 45 different proteins and 3 molecules of RNA (25S, 5.8S and 5S).

Its subcellular location is the cytoplasm. Component of the ribosome, a large ribonucleoprotein complex responsible for the synthesis of proteins in the cell. The small ribosomal subunit (SSU) binds messenger RNAs (mRNAs) and translates the encoded message by selecting cognate aminoacyl-transfer RNA (tRNA) molecules. The large subunit (LSU) contains the ribosomal catalytic site termed the peptidyl transferase center (PTC), which catalyzes the formation of peptide bonds, thereby polymerizing the amino acids delivered by tRNAs into a polypeptide chain. The nascent polypeptides leave the ribosome through a tunnel in the LSU and interact with protein factors that function in enzymatic processing, targeting, and the membrane insertion of nascent chains at the exit of the ribosomal tunnel. This Candida albicans (strain SC5314 / ATCC MYA-2876) (Yeast) protein is Small ribosomal subunit protein eS8 (RPS8A).